A 568-amino-acid chain; its full sequence is Polyprotein P2A (568 aa).

A run of 2 helical transmembrane segments spans residues K10–A30 and T41–C61. Positions V129–D326 constitute a Peptidase S39 domain. Residues H176, D209, and S276 each act as for protease activity in the active site. T339 is subject to Phosphothreonine; by host. The residue at position 390 (S390) is a Phosphoserine; by host. Disordered stretches follow at residues L403–I435 and S469–K568. Polar residues-rich tracts occupy residues N419–I435 and S469–G478. The segment covering A481–R502 has biased composition (basic and acidic residues). Positions N507 to S516 are enriched in polar residues. The segment covering K539–S549 has biased composition (basic residues). The segment covering V554–K568 has biased composition (polar residues).

Its subcellular location is the host membrane. Its function is as follows. Responsible for cleavages of polyprotein P2A and replicase polyprotein P2AB. In terms of biological role, covalently attached to the 5' extremity of the genomic and subgenomic RNAs. It may serve as a primer for the replicase. The chain is Polyprotein P2A from Cocksfoot mottle virus (isolate Dactylis glomerata/Norway/CfMV-NO/1995) (CfMV).